We begin with the raw amino-acid sequence, 159 residues long: Large ribosomal subunit protein uL11 (159 aa).

The interval M1 to P26 is disordered.

Belongs to the universal ribosomal protein uL11 family. In terms of assembly, part of the ribosomal stalk of the 50S ribosomal subunit. Interacts with L10 and the large rRNA to form the base of the stalk. L10 forms an elongated spine to which L12 dimers bind in a sequential fashion forming a multimeric L10(L12)X complex.

Its function is as follows. Forms part of the ribosomal stalk which helps the ribosome interact with GTP-bound translation factors. This is Large ribosomal subunit protein uL11 from Haloferax volcanii (strain ATCC 29605 / DSM 3757 / JCM 8879 / NBRC 14742 / NCIMB 2012 / VKM B-1768 / DS2) (Halobacterium volcanii).